Here is a 72-residue protein sequence, read N- to C-terminus: Translation initiation factor IF-1 (72 aa).

The region spanning 1–72 is the S1-like domain; sequence MSKEELIEFE…TKGRITYRFK (72 aa).

The protein belongs to the IF-1 family. Component of the 30S ribosomal translation pre-initiation complex which assembles on the 30S ribosome in the order IF-2 and IF-3, IF-1 and N-formylmethionyl-tRNA(fMet); mRNA recruitment can occur at any time during PIC assembly.

The protein localises to the cytoplasm. Its function is as follows. One of the essential components for the initiation of protein synthesis. Stabilizes the binding of IF-2 and IF-3 on the 30S subunit to which N-formylmethionyl-tRNA(fMet) subsequently binds. Helps modulate mRNA selection, yielding the 30S pre-initiation complex (PIC). Upon addition of the 50S ribosomal subunit IF-1, IF-2 and IF-3 are released leaving the mature 70S translation initiation complex. In Hyphomonas neptunium (strain ATCC 15444), this protein is Translation initiation factor IF-1.